A 389-amino-acid polypeptide reads, in one-letter code: Carbamoyl phosphate synthase small chain (389 aa).

The CPSase stretch occupies residues 1–197 (MMSSPAKAAK…AAKDASIGDD (197 aa)). Residues S51, G249, and G251 each contribute to the L-glutamine site. One can recognise a Glutamine amidotransferase type-1 domain in the interval 201–387 (HVVCMDFGMK…QEQLNEKCGV (187 aa)). Catalysis depends on C276, which acts as the Nucleophile. L277, Q280, N318, G320, and F321 together coordinate L-glutamine. Catalysis depends on residues H360 and E362.

The protein belongs to the CarA family. As to quaternary structure, composed of two chains; the small (or glutamine) chain promotes the hydrolysis of glutamine to ammonia, which is used by the large (or ammonia) chain to synthesize carbamoyl phosphate. Tetramer of heterodimers (alpha,beta)4.

It catalyses the reaction hydrogencarbonate + L-glutamine + 2 ATP + H2O = carbamoyl phosphate + L-glutamate + 2 ADP + phosphate + 2 H(+). The catalysed reaction is L-glutamine + H2O = L-glutamate + NH4(+). Its pathway is amino-acid biosynthesis; L-arginine biosynthesis; carbamoyl phosphate from bicarbonate: step 1/1. It functions in the pathway pyrimidine metabolism; UMP biosynthesis via de novo pathway; (S)-dihydroorotate from bicarbonate: step 1/3. In terms of biological role, small subunit of the glutamine-dependent carbamoyl phosphate synthetase (CPSase). CPSase catalyzes the formation of carbamoyl phosphate from the ammonia moiety of glutamine, carbonate, and phosphate donated by ATP, constituting the first step of 2 biosynthetic pathways, one leading to arginine and/or urea and the other to pyrimidine nucleotides. The small subunit (glutamine amidotransferase) binds and cleaves glutamine to supply the large subunit with the substrate ammonia. This Rhodopirellula baltica (strain DSM 10527 / NCIMB 13988 / SH1) protein is Carbamoyl phosphate synthase small chain.